A 118-amino-acid polypeptide reads, in one-letter code: Beta-2-microglobulin (118 aa).

Positions M1–A20 are cleaved as a signal peptide. Positions P25–I111 constitute an Ig-like C1-type domain. Residues C45 and C99 are joined by a disulfide bond.

It belongs to the beta-2-microglobulin family. As to quaternary structure, heterodimer of an alpha chain and a beta chain. Beta-2-microglobulin is the beta-chain of major histocompatibility complex class I molecules.

The protein localises to the secreted. In terms of biological role, component of the class I major histocompatibility complex (MHC). Involved in the presentation of peptide antigens to the immune system. This is Beta-2-microglobulin (B2M) from Equus asinus (Donkey).